Reading from the N-terminus, the 101-residue chain is Small ribosomal subunit protein uS14c (101 aa).

This sequence belongs to the universal ribosomal protein uS14 family. In terms of assembly, part of the 30S ribosomal subunit.

It localises to the plastid. Functionally, binds 16S rRNA, required for the assembly of 30S particles. The sequence is that of Small ribosomal subunit protein uS14c from Helicosporidium sp. subsp. Simulium jonesii (Green alga).